The following is a 122-amino-acid chain: Large ribosomal subunit protein uL14 (122 aa).

Belongs to the universal ribosomal protein uL14 family. Part of the 50S ribosomal subunit. Forms a cluster with proteins L3 and L19. In the 70S ribosome, L14 and L19 interact and together make contacts with the 16S rRNA in bridges B5 and B8. Interacts with ribosomal silencing factor RsfS, which may inhibit ribosomal subunit association.

Functionally, binds to 23S rRNA. Forms part of two intersubunit bridges in the 70S ribosome. This Treponema pallidum (strain Nichols) protein is Large ribosomal subunit protein uL14.